The chain runs to 407 residues: Putative mannan endo-1,4-beta-mannosidase 9 (407 aa).

The signal sequence occupies residues 1–31 (MGSKRRVILLPTLGVVVLAIAAAVLLHAGEA). Substrate-binding residues include Trp-95 and Asn-208. Glu-209 functions as the Proton donor in the catalytic mechanism. Substrate is bound at residue Tyr-284. Catalysis depends on Glu-324, which acts as the Nucleophile. Trp-366 serves as a coordination point for substrate.

The protein belongs to the glycosyl hydrolase 5 (cellulase A) family. In terms of tissue distribution, expression not detected.

The protein localises to the secreted. The catalysed reaction is Random hydrolysis of (1-&gt;4)-beta-D-mannosidic linkages in mannans, galactomannans and glucomannans.. This Oryza sativa subsp. japonica (Rice) protein is Putative mannan endo-1,4-beta-mannosidase 9 (MAN9).